Here is a 157-residue protein sequence, read N- to C-terminus: Selenoprotein F (157 aa).

The first 19 residues, 1–19 (MSGEVYILWLLSLIQTLSA), serve as a signal peptide directing secretion. A non-standard amino acid (selenocysteine) is located at residue selenocysteine 84.

The protein belongs to the selenoprotein M/F family. As to expression, expressed in the brain, liver and retina. Localized to the retinal ganglion cell layer, the inner nuclear layer and the outer nuclear layer at both parr and smolt stages.

It is found in the endoplasmic reticulum lumen. Functionally, may be involved in redox reactions associated with the formation of disulfide bonds. May contribute to the quality control of protein folding in the endoplasmic reticulum. May be involved in retinal development. This is Selenoprotein F from Oncorhynchus mykiss (Rainbow trout).